The chain runs to 634 residues: 1-deoxy-D-xylulose-5-phosphate synthase (634 aa).

Thiamine diphosphate-binding positions include H72 and 113–115; that span reads GHS. D144 lines the Mg(2+) pocket. Thiamine diphosphate is bound by residues 145–146, N173, Y284, and E367; that span reads GA. N173 serves as a coordination point for Mg(2+).

Belongs to the transketolase family. DXPS subfamily. Homodimer. Requires Mg(2+) as cofactor. Thiamine diphosphate is required as a cofactor.

The enzyme catalyses D-glyceraldehyde 3-phosphate + pyruvate + H(+) = 1-deoxy-D-xylulose 5-phosphate + CO2. It functions in the pathway metabolic intermediate biosynthesis; 1-deoxy-D-xylulose 5-phosphate biosynthesis; 1-deoxy-D-xylulose 5-phosphate from D-glyceraldehyde 3-phosphate and pyruvate: step 1/1. In terms of biological role, catalyzes the acyloin condensation reaction between C atoms 2 and 3 of pyruvate and glyceraldehyde 3-phosphate to yield 1-deoxy-D-xylulose-5-phosphate (DXP). This is 1-deoxy-D-xylulose-5-phosphate synthase from Listeria welshimeri serovar 6b (strain ATCC 35897 / DSM 20650 / CCUG 15529 / CIP 8149 / NCTC 11857 / SLCC 5334 / V8).